The following is a 598-amino-acid chain: Aspartate--tRNA(Asp/Asn) ligase (598 aa).

Glu-182 provides a ligand contact to L-aspartate. An aspartate region spans residues 206–209; sequence QIFK. Arg-228 is an L-aspartate binding site. ATP is bound by residues 228–230 and Gln-237; that span reads RDE. His-456 is a binding site for L-aspartate. An ATP-binding site is contributed by Glu-490. Arg-497 is a binding site for L-aspartate. 542–545 is an ATP binding site; that stretch reads GLDR.

It belongs to the class-II aminoacyl-tRNA synthetase family. Type 1 subfamily. In terms of assembly, homodimer.

Its subcellular location is the cytoplasm. The enzyme catalyses tRNA(Asx) + L-aspartate + ATP = L-aspartyl-tRNA(Asx) + AMP + diphosphate. Functionally, aspartyl-tRNA synthetase with relaxed tRNA specificity since it is able to aspartylate not only its cognate tRNA(Asp) but also tRNA(Asn). Reaction proceeds in two steps: L-aspartate is first activated by ATP to form Asp-AMP and then transferred to the acceptor end of tRNA(Asp/Asn). This chain is Aspartate--tRNA(Asp/Asn) ligase, found in Lachnoclostridium phytofermentans (strain ATCC 700394 / DSM 18823 / ISDg) (Clostridium phytofermentans).